The following is a 1307-amino-acid chain: Rab3 GTPase-activating protein regulatory subunit (1307 aa).

Belongs to the Rab3-GAP regulatory subunit family. The Rab3 GTPase-activating complex is a heterodimer composed of rbg-1 and rbg-2.

Its subcellular location is the cytoplasm. Its function is as follows. Probable regulatory subunit of a GTPase activating protein that has specificity for Rab3 subfamily. Rab3 proteins are involved in regulated exocytosis of neurotransmitters and hormones. Rab3 GTPase-activating complex specifically converts active Rab3-GTP to the inactive form Rab3-GDP. The chain is Rab3 GTPase-activating protein regulatory subunit (rbg-2) from Caenorhabditis elegans.